Consider the following 471-residue polypeptide: Collagen alpha-3(IV) chain (471 aa).

A triple-helical region region spans residues 1–238 (GLPGRKGPVG…KGKPGDTGPP (238 aa)). Residues 1-241 (GLPGRKGPVG…PGDTGPPAAG (241 aa)) form a disordered region. Residues 52-61 (MPGPPGPPGS) are compositionally biased toward pro residues. The short motif at 106–108 (RGD) is the Cell attachment site element. The segment covering 127 to 141 (PGPPGPPGQSGPKGP) has biased composition (pro residues). Positions 165-174 (SAGEPGMQGE) are enriched in low complexity. The span at 175 to 187 (PGPPGPPGDPGPC) shows a compositional bias: pro residues. A hydroxyproline mark is found at proline 232 and proline 238. The Collagen IV NC1 domain occupies 246–470 (GFVFTRHSQT…SRCQVCMKMR (225 aa)). Cystine bridges form between cysteine 261–cysteine 352, cysteine 294–cysteine 349, cysteine 306–cysteine 312, cysteine 371–cysteine 466, cysteine 405–cysteine 463, and cysteine 417–cysteine 423. An S-Lysyl-methionine sulfilimine (Met-Lys) (interchain with K-452) cross-link involves residue methionine 334. Lysine 452 is covalently cross-linked (S-Lysyl-methionine sulfilimine (Lys-Met) (interchain with M-334)).

It belongs to the type IV collagen family. As to quaternary structure, there are six type IV collagen isoforms, alpha 1(IV)-alpha 6(IV), each of which can form a triple helix structure with 2 other chains to generate type IV collagen network. The alpha 3(IV) chain forms a triple helical protomer with alpha 4(IV) and alpha 5(IV); this triple helical structure dimerizes through NC1-NC1 domain interactions such that the alpha 3(IV), alpha 4(IV) and alpha 5(IV) chains of one protomer connect with the alpha 5(IV), alpha 4(IV) and alpha 3(IV) chains of the opposite promoter, respectively. Interacts with ITGB3. Associates with LAMB2 at the neuromuscular junction and in GBM. Post-translationally, prolines at the third position of the tripeptide repeating unit (G-X-Y) are hydroxylated in some or all of the chains. Type IV collagens contain numerous cysteine residues which are involved in inter- and intramolecular disulfide bonding. 12 of these, located in the NC1 domain, are conserved in all known type IV collagens. In terms of processing, the trimeric structure of the NC1 domains is stabilized by covalent bonds between Lys and Met residues. Post-translationally, phosphorylated. Thought to be phosphorylated by CERT, but CERT does not have kinase activity.

Its subcellular location is the secreted. It localises to the extracellular space. The protein localises to the extracellular matrix. The protein resides in the basement membrane. In terms of biological role, type IV collagen is the major structural component of glomerular basement membranes (GBM), forming a 'chicken-wire' meshwork together with laminins, proteoglycans and entactin/nidogen. The chain is Collagen alpha-3(IV) chain (COL4A3) from Bos taurus (Bovine).